The following is a 306-amino-acid chain: Protein YIPF1 (306 aa).

Residues 1 to 119 are Cytoplasmic-facing; it reads MAAVDDLQFE…VRLYIRSNPD (119 aa). The segment at 33-59 is disordered; it reads PSVSFKHQPRPPGSLGREEDEELLGTN. Over residues 50-59 the composition is skewed to acidic residues; that stretch reads EEDEELLGTN. Residues 120–140 form a helical membrane-spanning segment; sequence LYGPFWICATLVFAIAISGNL. The Lumenal portion of the chain corresponds to 141–162; the sequence is SNFLIHLGEKTYHYVPEFQKVS. A helical transmembrane segment spans residues 163 to 183; it reads IAATVIYAYAWLVPLALWGFL. At 184–200 the chain is on the cytoplasmic side; it reads LWRNSKVMNIVSYSFLE. A helical transmembrane segment spans residues 201-221; that stretch reads IVCVYGYSLFIYIPTAVLWII. Residues 222–227 lie on the Lumenal side of the membrane; the sequence is PQRVIR. The chain crosses the membrane as a helical span at residues 228 to 248; the sequence is WVLVTIALGISGSVLAMTFWP. The Cytoplasmic portion of the chain corresponds to 249–256; sequence AVREDNRR. A helical transmembrane segment spans residues 257 to 277; the sequence is VALATIVTIMLLHVLLSVGCL. Over 278–306 the chain is Lumenal; that stretch reads AYFFDAPEMDHLPAAITTPNQTVAAAKSS. N-linked (GlcNAc...) asparagine glycosylation is present at Asn297.

It belongs to the YIP1 family. Interacts with YIPF6; this interaction may stabilize YIPF1. May also form a ternary complex with YIPF2 and YIPF6.

It localises to the golgi apparatus. The protein resides in the cis-Golgi network membrane. Its subcellular location is the trans-Golgi network membrane. The protein localises to the late endosome membrane. In Rattus norvegicus (Rat), this protein is Protein YIPF1 (Yipf1).